Reading from the N-terminus, the 286-residue chain is MRYFRLCIISLLATLPLAVHASPQPLEQIKLSESQLSGSVGMIEMDLASGRTLTAWRADGRFPMMSTFKVVLCGAVLARVDAGDEQLERKIHYRQQDLVDYSPVSEKHLADGMTVGELCAAAITMSDNSAANLLLATVGGPAGLTAFLRQIGDNVTRLDRWETELNEALPGDARDTTTPASMAATLRKLLTSQRLSARSQRQLLQWMVDDRVAGPLIRSVLPAGWFIADKTGASERGARGIVALLGPNNKAERIVVIYLRDTPASMAERNQQIAGIGAALIEHWQR.

The first 21 residues, 1–21 (MRYFRLCIISLLATLPLAVHA), serve as a signal peptide directing secretion. Residue Ser66 is the Acyl-ester intermediate of the active site. Cys73 and Cys119 form a disulfide bridge. Glu164 (proton acceptor) is an active-site residue. 230 to 232 (KTG) is a substrate binding site.

The protein belongs to the class-A beta-lactamase family.

The catalysed reaction is a beta-lactam + H2O = a substituted beta-amino acid. In terms of biological role, hydrolyzes ceftazidime and cefotaxime. This is Beta-lactamase SHV-34 (bla) from Escherichia coli.